Consider the following 343-residue polypeptide: Glycerol-3-phosphate dehydrogenase [NAD(P)+] (343 aa).

NADPH-binding residues include S15, F16, R36, and K110. Residues K110 and G138 each coordinate sn-glycerol 3-phosphate. Residue A142 participates in NADPH binding. Sn-glycerol 3-phosphate contacts are provided by K193, D246, S256, R257, and N258. K193 serves as the catalytic Proton acceptor. NADPH is bound at residue R257. E283 contacts NADPH.

This sequence belongs to the NAD-dependent glycerol-3-phosphate dehydrogenase family.

It localises to the cytoplasm. It catalyses the reaction sn-glycerol 3-phosphate + NAD(+) = dihydroxyacetone phosphate + NADH + H(+). It carries out the reaction sn-glycerol 3-phosphate + NADP(+) = dihydroxyacetone phosphate + NADPH + H(+). Its pathway is membrane lipid metabolism; glycerophospholipid metabolism. In terms of biological role, catalyzes the reduction of the glycolytic intermediate dihydroxyacetone phosphate (DHAP) to sn-glycerol 3-phosphate (G3P), the key precursor for phospholipid synthesis. In Alcanivorax borkumensis (strain ATCC 700651 / DSM 11573 / NCIMB 13689 / SK2), this protein is Glycerol-3-phosphate dehydrogenase [NAD(P)+].